Reading from the N-terminus, the 865-residue chain is Rifampicin phosphotransferase (865 aa).

Residues 2–314 (SGRLVVDLQD…FHIVQSRPIT (313 aa)) form an ATP-binding region. Residues Lys-23, Arg-117, Gly-132, Thr-136, Gln-183, Glu-297, Gln-309, and Arg-311 each coordinate ATP. Residues 327-752 (FRVYLSVGHQ…TSEGVALSGA (426 aa)) are rifampicin-binding. The disordered stretch occupies residues 403-430 (ENGEFEPTPAETDGGAPPAGDGAEPDEA). Positions 409–424 (PTPAETDGGAPPAGDG) are enriched in low complexity. Positions 765-863 (GLAVSAGTVE…VHGTEGYIEL (99 aa)) are swivel phosphohistidine. The active-site Tele-phosphohistidine intermediate is His-823.

Belongs to the rifampicin phosphotransferase family.

The catalysed reaction is rifampicin + ATP + H2O = 21-phosphorifampicin + AMP + phosphate + 2 H(+). Functionally, catalyzes the phosphorylation of rifampicin, also known as rifampin (RIF), leading to its inactivation. Confers high level resistance to a variety of clinically used rifamycin antibiotics. In Streptomyces sp, this protein is Rifampicin phosphotransferase.